A 417-amino-acid polypeptide reads, in one-letter code: MSLEKMGQAAREAAYQLATISTAQKNWALAAIADELEARSSQILAANDKDIAAGREAGLSEAMLDRLLLNPARLAGIVADVRKVITLDDPVGAEIDCRVLENGLRLSRRRVPIGVIGVIYEARPNVTIDIASLCLKTGNASMLRGGRETFHSNLELVRVIQAALAASGLPAEAVQYIDNPDRALVGELLRLDRYVDMIIPRGGAGLHKMCKENSSIPVIIGGFGISHVFVDESADPVRSLAVIENAKVQRPSACNALDTLLVHKKIAASFLPQLVRLMNERQVTLVAAPNAMSLLAGADNLCEAGPEDFDTEWLGLTLGIKLVADVNEALAHMREHNAGHSDAILTNDLANAERFVNGAGSAAVYVNASTRFTDGGQFGLGAEVAVSTQMLHARGPMGLTELTSYKWVGLADYLICA.

It belongs to the gamma-glutamyl phosphate reductase family.

The protein resides in the cytoplasm. The catalysed reaction is L-glutamate 5-semialdehyde + phosphate + NADP(+) = L-glutamyl 5-phosphate + NADPH + H(+). It functions in the pathway amino-acid biosynthesis; L-proline biosynthesis; L-glutamate 5-semialdehyde from L-glutamate: step 2/2. Catalyzes the NADPH-dependent reduction of L-glutamate 5-phosphate into L-glutamate 5-semialdehyde and phosphate. The product spontaneously undergoes cyclization to form 1-pyrroline-5-carboxylate. The sequence is that of Gamma-glutamyl phosphate reductase from Aeromonas salmonicida (strain A449).